We begin with the raw amino-acid sequence, 195 residues long: Probable nicotinate-nucleotide adenylyltransferase (195 aa).

This sequence belongs to the NadD family.

The catalysed reaction is nicotinate beta-D-ribonucleotide + ATP + H(+) = deamido-NAD(+) + diphosphate. The protein operates within cofactor biosynthesis; NAD(+) biosynthesis; deamido-NAD(+) from nicotinate D-ribonucleotide: step 1/1. Functionally, catalyzes the reversible adenylation of nicotinate mononucleotide (NaMN) to nicotinic acid adenine dinucleotide (NaAD). The polypeptide is Probable nicotinate-nucleotide adenylyltransferase (Chlorobaculum parvum (strain DSM 263 / NCIMB 8327) (Chlorobium vibrioforme subsp. thiosulfatophilum)).